The following is a 518-amino-acid chain: GTPase MTG2, mitochondrial (518 aa).

A mitochondrion-targeting transit peptide spans 1–23; that stretch reads MSIAWSSVFKRELRLERFLPRVY. An Obg domain is found at 89-339; it reads GNFVDVRIVK…QHFLFELKSI (251 aa). Residues 340–512 enclose the OBG-type G domain; it reads ADLGLIGLPN…LKKKMFKCAR (173 aa). GTP contacts are provided by residues 346–353, 394–398, and 460–463; these read GLPNAGKS, DIPGI, and NKVD.

It belongs to the TRAFAC class OBG-HflX-like GTPase superfamily. OBG GTPase family. In terms of assembly, interacts with the mitochondrial 54S large ribosomal subunit.

The protein resides in the mitochondrion inner membrane. Functionally, required for mitochondrial protein synthesis. May be involved in mitochondrial ribosome biogenesis. The chain is GTPase MTG2, mitochondrial (MTG2) from Saccharomyces cerevisiae (strain ATCC 204508 / S288c) (Baker's yeast).